Here is a 226-residue protein sequence, read N- to C-terminus: UPF0758 protein GK2618 (226 aa).

The 123-residue stretch at 104 to 226 (VIRCPEDGAK…FISLKEKGYV (123 aa)) folds into the MPN domain. Zn(2+)-binding residues include H175, H177, and D188. Residues 175–188 (HNHPSGDPTPSRED) carry the JAMM motif motif.

Belongs to the UPF0758 family.

The protein is UPF0758 protein GK2618 of Geobacillus kaustophilus (strain HTA426).